A 217-amino-acid chain; its full sequence is MGQKINPLGFRLGTTQSHHSVWFAQPKNYSGGLQEDKKIKDCIKNYVQKNRKISSGVEGIARIKIKKRIDLIQVIIYMGFPKFLEGNPQGIEELQSNIQKEFNSVNQKLNIAITRIAKPYGQPNILAEFIAGQLKNRVSFRKAMKKAIELTEQADTKGIQIQIAGRIDGKEIARVEWIREGRVPLQTIRAKIDYCSYTVRTIYGALGIKIWIFAGEE.

In terms of domain architecture, KH type-2 spans 43 to 117; the sequence is IKNYVQKNRK…KLNIAITRIA (75 aa).

This sequence belongs to the universal ribosomal protein uS3 family. As to quaternary structure, part of the 30S ribosomal subunit.

It localises to the plastid. The protein resides in the chloroplast. In Ranunculus macranthus (Large buttercup), this protein is Small ribosomal subunit protein uS3c (rps3).